The primary structure comprises 576 residues: 5'-nucleotidase (576 aa).

An N-terminal signal peptide occupies residues 1 to 28 (MRPAAAKVPKWLLLALSALLPQWPAASA). Positions 38 and 40 each coordinate Zn(2+). The cysteines at positions 53 and 59 are disulfide-linked. The N-linked (GlcNAc...) asparagine glycan is linked to Asn-55. Positions 87, 119, 222, and 245 each coordinate Zn(2+). 2 N-linked (GlcNAc...) asparagine glycosylation sites follow: Asn-313 and Asn-335. 2 disulfide bridges follow: Cys-355-Cys-360 and Cys-367-Cys-389. Arg-356 serves as a coordination point for AMP. Arg-356 is an IMP binding site. Residues Asn-392 and Arg-397 each contribute to the AMP site. IMP-binding residues include Asn-392 and Arg-397. The N-linked (GlcNAc...) asparagine glycan is linked to Asn-405. Position 419 (Phe-419) interacts with AMP. Phe-419 is a binding site for IMP. Residues Cys-478 and Cys-481 are joined by a disulfide bond. Residues Tyr-502 and Asp-508 each contribute to the AMP site. IMP-binding residues include Tyr-502 and Asp-508. Ser-551 carries GPI-anchor amidated serine lipidation. A propeptide spans 552–576 (AASHYQGSFPLVILSFWAMILILYQ) (removed in mature form).

The protein belongs to the 5'-nucleotidase family. As to quaternary structure, homodimer. Requires Zn(2+) as cofactor. Expressed at high levels in the placenta, kidney, lung and stomach and at lower levels in the thymus, spleen, skeletal muscle and esophagus.

The protein localises to the cell membrane. It catalyses the reaction a ribonucleoside 5'-phosphate + H2O = a ribonucleoside + phosphate. The enzyme catalyses a 2'-deoxyribonucleoside 5'-phosphate + H2O = a 2'-deoxyribonucleoside + phosphate. The catalysed reaction is dTMP + H2O = thymidine + phosphate. It carries out the reaction CMP + H2O = cytidine + phosphate. It catalyses the reaction IMP + H2O = inosine + phosphate. The enzyme catalyses AMP + H2O = adenosine + phosphate. The catalysed reaction is GMP + H2O = guanosine + phosphate. It carries out the reaction UMP + H2O = uridine + phosphate. It catalyses the reaction dAMP + H2O = 2'-deoxyadenosine + phosphate. The enzyme catalyses dCMP + H2O = 2'-deoxycytidine + phosphate. In terms of biological role, catalyzes the hydrolysis of nucleotide monophosphates, releasing inorganic phosphate and the corresponding nucleoside. Hydrolyzes IMP. Shows a preference for ribonucleotide monophosphates over their equivalent deoxyribose forms. Although AMP is the preferred substrate can also hydrolyze UMP, GMP, CMP, dAMP, dCMP, dTMP, NAD and NMN. This is 5'-nucleotidase (Nt5e) from Mus musculus (Mouse).